The primary structure comprises 205 residues: Dephospho-CoA kinase (205 aa).

Positions 6 to 205 constitute a DPCK domain; it reads RIGLTGGIAA…EIYAGWCAGR (200 aa). 14–19 lines the ATP pocket; that stretch reads AAGKST.

Belongs to the CoaE family.

The protein localises to the cytoplasm. It carries out the reaction 3'-dephospho-CoA + ATP = ADP + CoA + H(+). It functions in the pathway cofactor biosynthesis; coenzyme A biosynthesis; CoA from (R)-pantothenate: step 5/5. Functionally, catalyzes the phosphorylation of the 3'-hydroxyl group of dephosphocoenzyme A to form coenzyme A. The polypeptide is Dephospho-CoA kinase (Bifidobacterium longum (strain NCC 2705)).